The chain runs to 66 residues: Large ribosomal subunit protein bL31 (66 aa).

Zn(2+) contacts are provided by cysteine 16, cysteine 18, cysteine 36, and cysteine 39.

Belongs to the bacterial ribosomal protein bL31 family. Type A subfamily. As to quaternary structure, part of the 50S ribosomal subunit. It depends on Zn(2+) as a cofactor.

Binds the 23S rRNA. The protein is Large ribosomal subunit protein bL31 of Priestia megaterium (Bacillus megaterium).